Reading from the N-terminus, the 624-residue chain is Fibronectin type III domain-containing protein 2 (624 aa).

A signal peptide spans 1-19 (MREQFSVLVISLLFSSSYG). Fibronectin type-III domains follow at residues 131 to 236 (PPQN…TPDI), 240 to 330 (EPTN…TDVF), 334 to 430 (MPRF…TVPT), 431 to 524 (VPRE…PKRD), and 527 to 624 (VPPN…WPGR).

Prismatic layer of shell (at protein level).

It localises to the secreted. This is Fibronectin type III domain-containing protein 2 from Margaritifera margaritifera (Freshwater pearl mussel).